The following is a 349-amino-acid chain: Delta(7)-sterol 5(6)-desaturase ERG3A (349 aa).

3 helical membrane-spanning segments follow: residues 84–104 (ITWI…YIFI), 124–144 (IIAA…FFLL), and 162–182 (LWYD…CIYW). One can recognise a Fatty acid hydroxylase domain in the interval 170–296 (PLFLLFTDFC…FTAFDRMGGT (127 aa)). A Histidine box-1 motif is present at residues 184 to 188 (HRWLH). The Histidine box-2 motif lies at 197-201 (HKLHH). A helical membrane pass occupies residues 227–247 (HIFPFIFPLQKMAYVALFVFV). The short motif at 272 to 276 (HSLHH) is the Histidine box-3 element.

Belongs to the sterol desaturase family.

Its subcellular location is the endoplasmic reticulum membrane. It carries out the reaction episterol + 2 Fe(II)-[cytochrome b5] + O2 + 2 H(+) = 5-dehydroepisterol + 2 Fe(III)-[cytochrome b5] + 2 H2O. The protein operates within steroid metabolism; ergosterol biosynthesis. Functionally, C-5 sterol desaturase; part of the third module of ergosterol biosynthesis pathway that includes the late steps of the pathway. ERG3A and ERG3BB catalyze the introduction of a C-5 double bond in the B ring to produce 5-dehydroepisterol. The third module or late pathway involves the ergosterol synthesis itself through consecutive reactions that mainly occur in the endoplasmic reticulum (ER) membrane. Firstly, the squalene synthase ERG9 catalyzes the condensation of 2 farnesyl pyrophosphate moieties to form squalene, which is the precursor of all steroids. Squalene synthase is crucial for balancing the incorporation of farnesyl diphosphate (FPP) into sterol and nonsterol isoprene synthesis. Secondly, squalene is converted into lanosterol by the consecutive action of the squalene epoxidase ERG1 and the lanosterol synthase ERG7. Then, the delta(24)-sterol C-methyltransferase ERG6 methylates lanosterol at C-24 to produce eburicol. Eburicol is the substrate of the sterol 14-alpha demethylase encoded by CYP51A, CYP51B and CYP51C, to yield 4,4,24-trimethyl ergosta-8,14,24(28)-trienol. CYP51B encodes the enzyme primarily responsible for sterol 14-alpha-demethylation, and plays an essential role in ascospore formation. CYP51A encodes an additional sterol 14-alpha-demethylase, induced on ergosterol depletion and responsible for the intrinsic variation in azole sensitivity. The third CYP51 isoform, CYP51C, does not encode a sterol 14-alpha-demethylase, but is required for full virulence on host wheat ears. The C-14 reductase ERG24 then reduces the C14=C15 double bond which leads to 4,4-dimethylfecosterol. A sequence of further demethylations at C-4, involving the C-4 demethylation complex containing the C-4 methylsterol oxidases ERG25, the sterol-4-alpha-carboxylate 3-dehydrogenase ERG26 and the 3-keto-steroid reductase ERG27, leads to the production of fecosterol via 4-methylfecosterol. ERG28 has a role as a scaffold to help anchor ERG25, ERG26 and ERG27 to the endoplasmic reticulum. The C-8 sterol isomerase ERG2 then catalyzes the reaction which results in unsaturation at C-7 in the B ring of sterols and thus converts fecosterol to episterol. The sterol-C5-desaturases ERG3A and ERG3BB then catalyze the introduction of a C-5 double bond in the B ring to produce 5-dehydroepisterol. The C-22 sterol desaturases ERG5A and ERG5B further convert 5-dehydroepisterol into ergosta-5,7,22,24(28)-tetraen-3beta-ol by forming the C-22(23) double bond in the sterol side chain. Finally, ergosta-5,7,22,24(28)-tetraen-3beta-ol is substrate of the C-24(28) sterol reductase ERG4 to produce ergosterol. The protein is Delta(7)-sterol 5(6)-desaturase ERG3A of Gibberella zeae (strain ATCC MYA-4620 / CBS 123657 / FGSC 9075 / NRRL 31084 / PH-1) (Wheat head blight fungus).